Reading from the N-terminus, the 463-residue chain is GTPase Der (463 aa).

EngA-type G domains follow at residues 27 to 190 and 200 to 373; these read PVVA…PEVG and RRVA…ASWD. GTP contacts are provided by residues 33–40, 80–84, 142–145, 206–213, 253–257, and 318–321; these read GRPNVGKS, DTGGW, NKVD, GKPNVGKS, DTAGL, and NKWD. Positions 374–456 constitute a KH-like domain; the sequence is TRIATGPLNT…PIRVNVRVRE (83 aa).

This sequence belongs to the TRAFAC class TrmE-Era-EngA-EngB-Septin-like GTPase superfamily. EngA (Der) GTPase family. Associates with the 50S ribosomal subunit.

Its function is as follows. GTPase that plays an essential role in the late steps of ribosome biogenesis. In Mycobacterium bovis (strain ATCC BAA-935 / AF2122/97), this protein is GTPase Der.